Reading from the N-terminus, the 496-residue chain is Lysosomal Pro-X carboxypeptidase (496 aa).

Positions 1–21 (MGRRALLLLLLSFLAPWATIA) are cleaved as a signal peptide. Positions 22–45 (LRPALRALGSLHLPTNPTSLPAVA) are excised as a propeptide. 2 N-linked (GlcNAc...) asparagine glycosylation sites follow: asparagine 47 and asparagine 101. The Charge relay system role is filled by serine 179. The segment at 194–334 (HMVVGALAAS…QNIFQALNVY (141 aa)) is SKS domain. 4 disulfides stabilise this stretch: cysteine 215-cysteine 372, cysteine 233-cysteine 310, cysteine 264-cysteine 343, and cysteine 364-cysteine 394. N-linked (GlcNAc...) asparagine glycosylation is found at asparagine 317, asparagine 336, and asparagine 345. An N-linked (GlcNAc...) asparagine glycan is attached at asparagine 415. Active-site charge relay system residues include aspartate 430 and histidine 455.

It belongs to the peptidase S28 family. Homodimer. Highest levels in placenta, lung and liver. Also present in heart, brain, pancreas and kidney.

It localises to the lysosome. The catalysed reaction is Cleavage of a -Pro-|-Xaa bond to release a C-terminal amino acid.. Its function is as follows. Cleaves C-terminal amino acids linked to proline in peptides such as angiotensin II, III and des-Arg9-bradykinin. This cleavage occurs at acidic pH, but enzymatic activity is retained with some substrates at neutral pH. This Homo sapiens (Human) protein is Lysosomal Pro-X carboxypeptidase (PRCP).